The chain runs to 495 residues: Probable plastidic glucose transporter 3 (495 aa).

12 consecutive transmembrane segments (helical) span residues 55 to 75 (LPHV…LGVV), 97 to 117 (LVVS…GLVA), 131 to 151 (LPMI…GMLL), 154 to 174 (FLVG…VTEV), 183 to 203 (YGSS…FAGI), 214 to 234 (ICFW…ELCV), 294 to 314 (VVFI…NAVF), 330 to 350 (SANI…VVLM), 357 to 377 (VLLI…AIAY), 384 to 404 (FGTL…FATG), 425 to 445 (ALAV…LLFL), and 451 to 471 (LGSV…VIFV).

This sequence belongs to the major facilitator superfamily. Sugar transporter (TC 2.A.1.1) family.

It localises to the plastid. Its subcellular location is the chloroplast membrane. Functionally, may be involved in the efflux of glucose towards the cytosol. This Arabidopsis thaliana (Mouse-ear cress) protein is Probable plastidic glucose transporter 3.